We begin with the raw amino-acid sequence, 97 residues long: Class II hydrophobin 3 (97 aa).

The N-terminal stretch at 1–16 is a signal peptide; that stretch reads MKFFAAAALFIAGVLA. Cystine bridges form between cysteine 30–cysteine 79, cysteine 40–cysteine 70, cysteine 41–cysteine 53, and cysteine 80–cysteine 91.

Belongs to the cerato-ulmin hydrophobin family. Homodimer. Homodimers further self-assemble to form highly ordered films at water-air interfaces through intermolecular interactions.

Its subcellular location is the secreted. It localises to the cell wall. In terms of biological role, aerial growth, conidiation, and dispersal of filamentous fungi in the environment rely upon a capability of their secreting small amphipathic proteins called hydrophobins (HPBs) with low sequence identity. Class I can self-assemble into an outermost layer of rodlet bundles on aerial cell surfaces, conferring cellular hydrophobicity that supports fungal growth, development and dispersal; whereas Class II form highly ordered films at water-air interfaces through intermolecular interactions but contribute nothing to the rodlet structure. In Trichoderma asperellum (strain ATCC 204424 / CBS 433.97 / NBRC 101777), this protein is Class II hydrophobin 3.